Here is a 515-residue protein sequence, read N- to C-terminus: Protein pid-4 (515 aa).

Positions 496–515 are disordered; it reads DRSPQKFKFPASGSYMKPAN.

In terms of assembly, may interact with pid-2, app-1 and prmt-5.

The protein localises to the cytoplasm. Its subcellular location is the perinuclear region. The protein resides in the P-body. In terms of biological role, together with pid-5, it is involved in gene silencing mediated by a class of 21 nucleotide PIWI-interacting RNAs (piRNAs) that possess a uracil residue at the 5'-end (also called 21U-RNAs) and guide the Piwi protein prg-1 to its DNA targets for silencing. Together with pid-5, it is required for the biogenesis of secondary and tertiary 22G-siRNAs. Specifically, promotes the production of 22G-siRNAs from the 5' end of target mRNAs. Together with pid-5, plays a role in small RNA-directed transgenerational epigenetic inheritance (also called RNAe) over several generations and germline immortality. Together with pid-5, plays a role in the formation of liquid-like condensates in the cytoplasm called Z granules. This Caenorhabditis elegans protein is Protein pid-4.